We begin with the raw amino-acid sequence, 319 residues long: Coproporphyrin III ferrochelatase 2 (319 aa).

Residues Y13, R30, 46–47 (RY), S54, and Y125 contribute to the Fe-coproporphyrin III site. Residues H181 and E262 each coordinate Fe(2+).

The protein belongs to the ferrochelatase family.

The protein resides in the cytoplasm. It catalyses the reaction Fe-coproporphyrin III + 2 H(+) = coproporphyrin III + Fe(2+). It participates in porphyrin-containing compound metabolism; protoheme biosynthesis. Involved in coproporphyrin-dependent heme b biosynthesis. Catalyzes the insertion of ferrous iron into coproporphyrin III to form Fe-coproporphyrin III. This is Coproporphyrin III ferrochelatase 2 from Bacillus thuringiensis subsp. konkukian (strain 97-27).